Reading from the N-terminus, the 269-residue chain is 4-hydroxy-tetrahydrodipicolinate reductase (269 aa).

Residue 9–14 (GVAGRM) participates in NAD(+) binding. Position 36 (Arg-36) interacts with NADP(+). Residues 99-101 (GTT) and 123-126 (APNM) each bind NAD(+). His-156 acts as the Proton donor/acceptor in catalysis. His-157 serves as a coordination point for (S)-2,3,4,5-tetrahydrodipicolinate. Lys-160 serves as the catalytic Proton donor. 166–167 (GT) is a (S)-2,3,4,5-tetrahydrodipicolinate binding site.

It belongs to the DapB family.

The protein resides in the cytoplasm. It catalyses the reaction (S)-2,3,4,5-tetrahydrodipicolinate + NAD(+) + H2O = (2S,4S)-4-hydroxy-2,3,4,5-tetrahydrodipicolinate + NADH + H(+). The catalysed reaction is (S)-2,3,4,5-tetrahydrodipicolinate + NADP(+) + H2O = (2S,4S)-4-hydroxy-2,3,4,5-tetrahydrodipicolinate + NADPH + H(+). It participates in amino-acid biosynthesis; L-lysine biosynthesis via DAP pathway; (S)-tetrahydrodipicolinate from L-aspartate: step 4/4. In terms of biological role, catalyzes the conversion of 4-hydroxy-tetrahydrodipicolinate (HTPA) to tetrahydrodipicolinate. The polypeptide is 4-hydroxy-tetrahydrodipicolinate reductase (Methylococcus capsulatus (strain ATCC 33009 / NCIMB 11132 / Bath)).